Reading from the N-terminus, the 294-residue chain is Endonuclease 3 (294 aa).

An N-terminal signal peptide occupies residues 1 to 24; it reads MGWSLRMWIVSILVLTQLVNGALC. The a divalent metal cation site is built by Trp25 and His30. Residue 25–30 coordinates substrate; sequence WGDAGH. The cysteines at positions 34 and 65 are disulfide-linked. A divalent metal cation is bound by residues Asp69 and His84. Residues 69-75, 84-87, and 94-99 contribute to the substrate site; these read DEIKKLP, HFAD, and NYEYSR. 3 disulfides stabilise this stretch: Cys93/Cys241, Cys101/Cys106, and Cys221/Cys228. 2 residues coordinate substrate: Asn113 and Tyr131. Asn113 carries an N-linked (GlcNAc...) asparagine glycan. N-linked (GlcNAc...) asparagine glycosylation is present at Asn132. Positions 142, 146, 152, 176, and 180 each coordinate a divalent metal cation. Positions 142-191 are substrate binding; that stretch reads HYMGDIHQPLHEGFIGDLGGNKIKVHWYNQETNLHRVWDDMIIESALETY. 3 N-linked (GlcNAc...) asparagine glycosylation sites follow: Asn193, Asn224, and Asn247. Residues 279 to 294 constitute a propeptide, removed in mature form; the sequence is GTLNRIFSAKRKLARA.

The protein belongs to the nuclease type I family. Monomer. It depends on Zn(2+) as a cofactor. Requires Mn(2+) as cofactor.

It carries out the reaction Endonucleolytic cleavage to 5'-phosphomononucleotide and 5'-phosphooligonucleotide end-products.. Endonuclease that can use RNA and single-stranded DNA as substrates. In contradiction with PubMed:23620482, cannot hydrolyze single-stranded DNA and does not cleave mismatches. In Arabidopsis thaliana (Mouse-ear cress), this protein is Endonuclease 3.